The following is a 97-amino-acid chain: Aspartyl/glutamyl-tRNA(Asn/Gln) amidotransferase subunit C (97 aa).

Belongs to the GatC family. In terms of assembly, heterotrimer of A, B and C subunits.

The catalysed reaction is L-glutamyl-tRNA(Gln) + L-glutamine + ATP + H2O = L-glutaminyl-tRNA(Gln) + L-glutamate + ADP + phosphate + H(+). It catalyses the reaction L-aspartyl-tRNA(Asn) + L-glutamine + ATP + H2O = L-asparaginyl-tRNA(Asn) + L-glutamate + ADP + phosphate + 2 H(+). Functionally, allows the formation of correctly charged Asn-tRNA(Asn) or Gln-tRNA(Gln) through the transamidation of misacylated Asp-tRNA(Asn) or Glu-tRNA(Gln) in organisms which lack either or both of asparaginyl-tRNA or glutaminyl-tRNA synthetases. The reaction takes place in the presence of glutamine and ATP through an activated phospho-Asp-tRNA(Asn) or phospho-Glu-tRNA(Gln). The polypeptide is Aspartyl/glutamyl-tRNA(Asn/Gln) amidotransferase subunit C (Prochlorococcus marinus (strain MIT 9303)).